A 354-amino-acid polypeptide reads, in one-letter code: 4-hydroxy-3-methylbut-2-en-1-yl diphosphate synthase (flavodoxin) (354 aa).

4 residues coordinate [4Fe-4S] cluster: Cys265, Cys268, Cys300, and Glu307.

It belongs to the IspG family. [4Fe-4S] cluster serves as cofactor.

It catalyses the reaction (2E)-4-hydroxy-3-methylbut-2-enyl diphosphate + oxidized [flavodoxin] + H2O + 2 H(+) = 2-C-methyl-D-erythritol 2,4-cyclic diphosphate + reduced [flavodoxin]. It functions in the pathway isoprenoid biosynthesis; isopentenyl diphosphate biosynthesis via DXP pathway; isopentenyl diphosphate from 1-deoxy-D-xylulose 5-phosphate: step 5/6. Functionally, converts 2C-methyl-D-erythritol 2,4-cyclodiphosphate (ME-2,4cPP) into 1-hydroxy-2-methyl-2-(E)-butenyl 4-diphosphate. The chain is 4-hydroxy-3-methylbut-2-en-1-yl diphosphate synthase (flavodoxin) from Hydrogenobaculum sp. (strain Y04AAS1).